A 138-amino-acid chain; its full sequence is uncharacterized protein (138 aa).

Positions 1-73 (MCSAGQLLGG…NHTGEPVGDD (73 aa)) are disordered. Positions 7–18 (LLGGGGGGGGSG) are enriched in gly residues. A compositionally biased stretch (basic and acidic residues) spans 19–29 (GERDEDRDALA). Residues 30–43 (ERAAAGTEQESGAS) are compositionally biased toward low complexity. A helical membrane pass occupies residues 106-126 (VIVIFFWVMLWFLGLPAFGLV).

This sequence belongs to the FAM241 family.

The protein localises to the membrane. This is an uncharacterized protein from Bos taurus (Bovine).